We begin with the raw amino-acid sequence, 348 residues long: Dihydroorotase (348 aa).

His-17 and His-19 together coordinate Zn(2+). Residues 19–21 (HLR) and Asn-45 contribute to the substrate site. Residues Lys-103, His-140, and His-178 each coordinate Zn(2+). An N6-carboxylysine modification is found at Lys-103. Position 140 (His-140) interacts with substrate. Leu-223 provides a ligand contact to substrate. Position 251 (Asp-251) interacts with Zn(2+). Asp-251 is a catalytic residue. 2 residues coordinate substrate: His-255 and Ala-267.

Belongs to the metallo-dependent hydrolases superfamily. DHOase family. Class II DHOase subfamily. As to quaternary structure, homodimer. Zn(2+) serves as cofactor.

It catalyses the reaction (S)-dihydroorotate + H2O = N-carbamoyl-L-aspartate + H(+). It participates in pyrimidine metabolism; UMP biosynthesis via de novo pathway; (S)-dihydroorotate from bicarbonate: step 3/3. Functionally, catalyzes the reversible cyclization of carbamoyl aspartate to dihydroorotate. This chain is Dihydroorotase, found in Yersinia enterocolitica serotype O:8 / biotype 1B (strain NCTC 13174 / 8081).